A 557-amino-acid chain; its full sequence is Potassium-transporting ATPase potassium-binding subunit (557 aa).

Helical transmembrane passes span 6–26 (IQLL…GLGL), 59–79 (ALSL…ILFF), 127–147 (AGLT…LLAL), 172–192 (LYVL…FGVV), 247–267 (ISNF…VFLY), 278–298 (WAIF…VWTF), 363–383 (IVFG…LLTV), 410–430 (ILGI…SVSV), 475–495 (VMIA…VLVI), and 520–540 (FYIL…FPVL).

This sequence belongs to the KdpA family. As to quaternary structure, the system is composed of three essential subunits: KdpA, KdpB and KdpC.

It is found in the cell inner membrane. Part of the high-affinity ATP-driven potassium transport (or Kdp) system, which catalyzes the hydrolysis of ATP coupled with the electrogenic transport of potassium into the cytoplasm. This subunit binds the periplasmic potassium ions and delivers the ions to the membrane domain of KdpB through an intramembrane tunnel. This chain is Potassium-transporting ATPase potassium-binding subunit, found in Leptospira interrogans serogroup Icterohaemorrhagiae serovar Lai (strain 56601).